Reading from the N-terminus, the 104-residue chain is Pyrimidine/purine nucleoside phosphorylase (104 aa).

Belongs to the nucleoside phosphorylase PpnP family.

The enzyme catalyses a purine D-ribonucleoside + phosphate = a purine nucleobase + alpha-D-ribose 1-phosphate. It catalyses the reaction adenosine + phosphate = alpha-D-ribose 1-phosphate + adenine. The catalysed reaction is cytidine + phosphate = cytosine + alpha-D-ribose 1-phosphate. It carries out the reaction guanosine + phosphate = alpha-D-ribose 1-phosphate + guanine. The enzyme catalyses inosine + phosphate = alpha-D-ribose 1-phosphate + hypoxanthine. It catalyses the reaction thymidine + phosphate = 2-deoxy-alpha-D-ribose 1-phosphate + thymine. The catalysed reaction is uridine + phosphate = alpha-D-ribose 1-phosphate + uracil. It carries out the reaction xanthosine + phosphate = alpha-D-ribose 1-phosphate + xanthine. Catalyzes the phosphorolysis of diverse nucleosides, yielding D-ribose 1-phosphate and the respective free bases. Can use uridine, adenosine, guanosine, cytidine, thymidine, inosine and xanthosine as substrates. Also catalyzes the reverse reactions. This Geobacter metallireducens (strain ATCC 53774 / DSM 7210 / GS-15) protein is Pyrimidine/purine nucleoside phosphorylase.